The primary structure comprises 2025 residues: E3 ubiquitin-protein ligase TRIP12 (2025 aa).

Residues methionine 1–glycine 10 are compositionally biased toward polar residues. Residues methionine 1–glutamate 404 are disordered. Serine 2 bears the N-acetylserine mark. The residue at position 12 (serine 12) is a Phosphoserine. The segment covering arginine 18–aspartate 27 has biased composition (polar residues). Residues aspartate 48 to arginine 70 are compositionally biased toward basic and acidic residues. Serine 77, serine 85, and serine 100 each carry phosphoserine. Composition is skewed to polar residues over residues proline 78 to serine 88, glutamate 99 to proline 108, and glutamate 119 to lysine 132. 2 stretches are compositionally biased toward low complexity: residues serine 154–threonine 166 and proline 175–valine 216. The residue at position 181 (lysine 181) is an N6-acetyllysine. Polar residues predominate over residues proline 280–proline 290. Serine 310 and serine 312 each carry phosphoserine. A compositionally biased stretch (polar residues) spans glutamine 326–arginine 338. The span at glycine 346 to aspartate 358 shows a compositional bias: basic and acidic residues. Positions asparagine 362–alanine 371 are enriched in polar residues. The segment covering glycine 379–glutamate 397 has biased composition (low complexity). The WWE domain maps to methionine 755–lysine 869. The interval glutamate 970–serine 1077 is disordered. The residue at position 975 (serine 975) is a Phosphoserine. Residues glycine 983 to alanine 1006 show a composition bias toward low complexity. 2 positions are modified to phosphoserine: serine 1024 and serine 1030. Positions lysine 1034–lysine 1047 are enriched in basic residues. Residue serine 1049 is modified to Phosphoserine. A compositionally biased stretch (basic and acidic residues) spans proline 1050–asparagine 1059. A compositionally biased stretch (low complexity) spans lysine 1062 to serine 1073. Phosphoserine is present on residues serine 1063, serine 1350, serine 1355, serine 1362, and serine 1409. Threonine 1410 is subject to Phosphothreonine. 2 disordered regions span residues serine 1440–lysine 1466 and threonine 1601–aspartate 1620. At lysine 1458 the chain carries N6-acetyllysine. Serine 1460 carries the post-translational modification Phosphoserine. The tract at residues glutamate 1529–proline 1603 is K-box. Residues proline 1918–serine 2025 form the HECT domain. The active-site Glycyl thioester intermediate is the cysteine 1992.

The protein belongs to the UPL family. K-HECT subfamily. In terms of assembly, interacts with MYC; leading to disrupt interaction with isoform p19ARF/ARF of CDKN2A. Interacts with TRADD; leading to disrupt interaction with isoform p19ARF/ARF of CDKN2A. Interacts with SMARCC1; leading to disrupt interaction with SMARCE1.

The protein resides in the nucleus. It is found in the nucleoplasm. The catalysed reaction is S-ubiquitinyl-[E2 ubiquitin-conjugating enzyme]-L-cysteine + [acceptor protein]-L-lysine = [E2 ubiquitin-conjugating enzyme]-L-cysteine + N(6)-ubiquitinyl-[acceptor protein]-L-lysine.. Its pathway is protein modification; protein ubiquitination. Its function is as follows. E3 ubiquitin-protein ligase involved in ubiquitin fusion degradation (UFD) pathway and regulation of DNA repair. Part of the ubiquitin fusion degradation (UFD) pathway, a process that mediates ubiquitination of protein at their N-terminus, regardless of the presence of lysine residues in target proteins. Acts as a key regulator of DNA damage response by acting as a suppressor of RNF168, an E3 ubiquitin-protein ligase that promotes accumulation of 'Lys-63'-linked histone H2A and H2AX at DNA damage sites, thereby acting as a guard against excessive spreading of ubiquitinated chromatin at damaged chromosomes. In normal cells, mediates ubiquitination and degradation of isoform p19ARF/ARF of CDKN2A, a lysine-less tumor suppressor required for p53/TP53 activation under oncogenic stress. In cancer cells, however, isoform p19ARF/ARF and TRIP12 are located in different cell compartments, preventing isoform p19ARF/ARF ubiquitination and degradation. Does not mediate ubiquitination of isoform p16-INK4a of CDKN2A. Also catalyzes ubiquitination of NAE1 and SMARCE1, leading to their degradation. Ubiquitination and degradation of target proteins is regulated by interaction with proteins such as MYC, TRADD or SMARCC1, which disrupt the interaction between TRIP12 and target proteins. Mediates ubiquitination of ASXL1: following binding to N(6)-methyladenosine methylated DNA, ASXL1 is ubiquitinated by TRIP12, leading to its degradation and subsequent inactivation of the PR-DUB complex. In Rattus norvegicus (Rat), this protein is E3 ubiquitin-protein ligase TRIP12 (Trip12).